Reading from the N-terminus, the 1275-residue chain is Membrane-associated guanylate kinase, WW and PDZ domain-containing protein 2 (1275 aa).

The 85-residue stretch at 17–101 (ESVIGRNPEG…PLRLKCVKQG (85 aa)) folds into the PDZ 1 domain. The 175-residue stretch at 109–283 (RHYLNLRFQK…PVYSQPEELK (175 aa)) folds into the Guanylate kinase-like domain. The interval 203–305 (LPGATPSAEG…ENEDSDPLPD (103 aa)) is disordered. Basic and acidic residues predominate over residues 280-295 (EELKDQMDDTKPTKPE). WW domains follow at residues 301 to 334 (DPLPDNWEMAYTEKGEVYFIDHNTKTTSWLDPRL) and 347 to 380 (NELPYGWEKIDDPIYGTYYVDHINRRTQFENPVL). The interaction with DDN stretch occupies residues 301-380 (DPLPDNWEMA…RRTQFENPVL (80 aa)). Position 361 is a phosphotyrosine (Tyr361). 2 PDZ domains span residues 425 to 509 (STTL…CRGY) and 604 to 682 (TLTI…HRGG). The residue at position 685 (Ser685) is a Phosphoserine. Positions 698 to 740 (ENQGSPQTSLSAPAVPQNLPFPPALHRSSFPDSTEAFDPRKPD) are disordered. The segment covering 699 to 708 (NQGSPQTSLS) has biased composition (polar residues). Residues 777 to 859 (DVHLRRMESG…NGQVNLTVRR (83 aa)) enclose the PDZ 4 domain. Residue Tyr826 is modified to Phosphotyrosine. The disordered stretch occupies residues 868–912 (CPENGRSPGSVSTHHSSPRSDYATYSNSNHAAPSSNASPPEGFAS). Ser883 and Ser884 each carry phosphoserine. The span at 893–907 (SNSNHAAPSSNASPP) shows a compositional bias: low complexity. The PDZ 5 domain maps to 919 to 1009 (DVVIHRKENE…SVTLRIIPQE (91 aa)). Residues 1010-1040 (ELNSPTSAPSSEKQSPMAQQHSPLAQQSPLA) show a composition bias toward polar residues. A disordered region spans residues 1010 to 1128 (ELNSPTSAPS…PDTRQYPLSD (119 aa)). At Ser1013 the chain carries Phosphoserine. Residues 1067–1083 (NSYRSEVKARQDVKPDI) are compositionally biased toward basic and acidic residues. The PDZ 6 domain occupies 1139–1221 (TVDMEKGAKG…RVRLLLKRGT (83 aa)).

The protein belongs to the MAGUK family. As to quaternary structure, interacts (via its WW domains) with DRPLA. Interacts (via its second PDZ domain) with PTEN (via unphosphorylated C-terminus); this interaction diminishes the degradation rate of PTEN. Interacts (via guanylate kinase domain) with DLGAP1. Interacts (via the PDZ domains) with GRIN2A, GRID2 and NLGN1. Interacts with CTNND2, CTNNB1 and MAGUIN-1. Interacts with ACVR2A, SMAD2 and SMAD3. Part of a complex consisting of MAGI2/ARIP1, ACVR2A, ACVR1B and SMAD3. May interact with HTR2A. Interacts with RAPGEF2. Identified in a complex with ACTN4, CASK, IQGAP1, NPHS1, SPTAN1 and SPTBN1. Interacts with DDN. Found in a complex, at least composed of KIDINS220, MAGI2, NTRK1 and RAPGEF2; the complex is mainly formed at late endosomes in a NGF-dependent manner. Interacts with RAPGEF2; the interaction occurs before or after nerve growth factor (NGF) stimulation. Interacts (via PDZ domain) with KIDINS220 (via C-terminal domain). Interacts with IGSF9 and HTR4. Interacts with DLL1. Found in a complex with IGSF9B and NLGN2; the interaction with IGSF9B is mediated via the PDZ 5 and PDZ 6 domains, while the interaction with NLGN2 is mediated via the WW1, WW2 and PDZ2 domains. Interacts (via PDZ 6 domain) with USH1G (via SAM domain); the interaction is triggered by phosphorylation of USH1G by CK2 and negatively regulates MAGI2-mediated endocytosis. Expressed throughout the retina except in the nuclear layers and the photoreceptor outer segments (at protein level). Highest retinal expression is observed in the outer plexiform layer, the outer limiting membrane and the inner segment of photoreceptor cells (at protein level). Expressed in brain.

The protein resides in the cytoplasm. The protein localises to the late endosome. Its subcellular location is the synapse. It localises to the synaptosome. It is found in the cell membrane. The protein resides in the cytoskeleton. The protein localises to the microtubule organizing center. Its subcellular location is the centrosome. It localises to the cell projection. It is found in the cilium. The protein resides in the centriole. The protein localises to the photoreceptor inner segment. Its subcellular location is the photoreceptor outer segment. Seems to act as a scaffold molecule at synaptic junctions by assembling neurotransmitter receptors and cell adhesion proteins. Plays a role in nerve growth factor (NGF)-induced recruitment of RAPGEF2 to late endosomes and neurite outgrowth. May play a role in regulating activin-mediated signaling in neuronal cells. Enhances the ability of PTEN to suppress AKT1 activation. Plays a role in receptor-mediated clathrin-dependent endocytosis which is required for ciliogenesis. This chain is Membrane-associated guanylate kinase, WW and PDZ domain-containing protein 2 (Magi2), found in Mus musculus (Mouse).